The sequence spans 697 residues: Protein arginine N-methyltransferase 7 (697 aa).

2 consecutive SAM-dependent MTase PRMT-type domains span residues 14-357 (QNTW…YSLW) and 366-697 (EQPA…EETK).

The protein belongs to the class I-like SAM-binding methyltransferase superfamily. Protein arginine N-methyltransferase family. PRMT7 subfamily.

Its function is as follows. Essential arginine methyltransferase that can both catalyze the formation of omega-N monomethylarginine (MMA) and symmetrical dimethylarginine (sDMA). Specifically mediates the symmetrical dimethylation of arginine residues in the small nuclear ribonucleoproteins SmD1 and SmD3. The chain is Protein arginine N-methyltransferase 7 (Art7) from Drosophila virilis (Fruit fly).